Reading from the N-terminus, the 160-residue chain is Small ribosomal subunit protein uS10m (160 aa).

It belongs to the universal ribosomal protein uS10 family. Component of the mitochondrial ribosome small subunit (28S) which comprises a 12S rRNA and about 30 distinct proteins.

The protein resides in the mitochondrion. This is Small ribosomal subunit protein uS10m (Mrps10) from Mus musculus (Mouse).